Reading from the N-terminus, the 202-residue chain is Virulence protein F (202 aa).

The span at 1-15 (MRNSSLRDASGSNDA) shows a compositional bias: polar residues. A disordered region spans residues 1 to 21 (MRNSSLRDASGSNDAQVPHKT). One can recognise an F-box domain in the interval 20–42 (KTELLNLPDHVLTEVAKRLATNN).

Component of SCF(virF) E3 ubiquitin ligase complexes. Interacts with host VIP1 and SKP1A. Interacts with Arabidopsis thaliana ENAP1/VFP3 and VFP5 in the host cell nucleus.

The protein resides in the host nucleus. In the host plant, component of SCF(virF) E3 ubiquitin ligase complexes, which mediate the ubiquitination and subsequent proteasomal degradation of target proteins such as the host VIP1, after its implication in T-DNA translocation to the host nucleus. Required for the formation of tumors of a wild-type size on certain plant species only. In Agrobacterium tumefaciens (strain 15955), this protein is Virulence protein F.